A 486-amino-acid chain; its full sequence is MNINIGLSDVLLISPMIALFLASLLPITMKVLRGNREQHALITLGQALMGIVAAVVLLVVFGGSDKTAFNNGLIFDGVTQWMGIIALAGAGAAMVMMYENPSTTGKQFSELIFLAMSSAVGMLILVSAVDLLMVFIGLEMMSLALYLMIAMSHEEKLSKEAALKYFILGSFASAIFLYGVAFIFGSTGGTNILSFMDNAAELVQTSRLFLFGVTFVILGFCFKVSIAPFHAWTPDVYQGAPTPHTAFMATAVKTVSFAAFLRIIATKSLTGSDQLFDILQWMAVITMIVGNAAAIMQNNFKRMIAYSSVAHSGYLMVGLITAGVSDNGAFGASGVIFYLLAYGLMTIGAFAIAAMLEKSENHIVNIDDLAGFAKQRPMLALCLTVFLLSLAGIPPTLGFFGKFYMFNAAIGEGLLWLAIWGMLNSVIGVYYYLRPIVVMYMKEGNAEIAGHSLNATTVTAVVMALAIVLMGFVSGPIFSAVEKSLL.

13 helical membrane-spanning segments follow: residues Ile-5–Leu-25, Leu-41–Phe-61, Gly-77–Met-97, Ser-118–Leu-138, Tyr-165–Gly-185, Phe-209–Phe-229, Thr-245–Ala-265, Leu-275–Ile-295, Ile-304–Val-324, Val-335–Met-355, Ala-380–Phe-400, Gly-413–Leu-433, and Val-458–Phe-478.

Belongs to the complex I subunit 2 family. In terms of assembly, NDH-1 is composed of 14 different subunits. Subunits NuoA, H, J, K, L, M, N constitute the membrane sector of the complex.

It localises to the cell inner membrane. The catalysed reaction is a quinone + NADH + 5 H(+)(in) = a quinol + NAD(+) + 4 H(+)(out). Its function is as follows. NDH-1 shuttles electrons from NADH, via FMN and iron-sulfur (Fe-S) centers, to quinones in the respiratory chain. The immediate electron acceptor for the enzyme in this species is believed to be ubiquinone. Couples the redox reaction to proton translocation (for every two electrons transferred, four hydrogen ions are translocated across the cytoplasmic membrane), and thus conserves the redox energy in a proton gradient. In Bdellovibrio bacteriovorus (strain ATCC 15356 / DSM 50701 / NCIMB 9529 / HD100), this protein is NADH-quinone oxidoreductase subunit N.